A 155-amino-acid chain; its full sequence is Transcription antitermination protein NusB (155 aa).

Belongs to the NusB family.

Its function is as follows. Involved in transcription antitermination. Required for transcription of ribosomal RNA (rRNA) genes. Binds specifically to the boxA antiterminator sequence of the ribosomal RNA (rrn) operons. The chain is Transcription antitermination protein NusB from Vibrio vulnificus (strain CMCP6).